We begin with the raw amino-acid sequence, 221 residues long: UPF0319 protein CGSHiGG_02140 (221 aa).

The signal sequence occupies residues 1-21 (MKLRAVVLGLATLCTSTATFA).

Belongs to the UPF0319 family.

This is UPF0319 protein CGSHiGG_02140 from Haemophilus influenzae (strain PittGG).